The sequence spans 306 residues: tRNA pseudouridine synthase B (306 aa).

Residue D48 is the Nucleophile of the active site.

This sequence belongs to the pseudouridine synthase TruB family. Type 1 subfamily.

It catalyses the reaction uridine(55) in tRNA = pseudouridine(55) in tRNA. Functionally, responsible for synthesis of pseudouridine from uracil-55 in the psi GC loop of transfer RNAs. The chain is tRNA pseudouridine synthase B from Haemophilus influenzae (strain PittEE).